The following is a 546-amino-acid chain: Aladin (546 aa).

Cysteine 2 is modified (N-acetylcysteine). Serine 33 carries the phosphoserine modification. 7 WD repeats span residues 142-180 (EFAQVTNWSSCCLRVFAWHPHTNKFAVALLDDSVRVYNA), 183-222 (TIVPSLKHRLQRNVASLAWKPLSASVLAVACQSCILIWTL), 234-274 (GCAQ…VWDV), 280-316 (VPLPWFRGGGVTNLLWSPDGSKILATTPSAVFRVWEA), 324-380 (WPTL…IVAD), 386-433 (IQTP…LFRT), and 442-482 (LPCG…IAHI). Serine 495, serine 511, serine 522, and serine 525 each carry phosphoserine. Residues 500-546 (RAQEPPAGGGGSIHDLPLFTETSPTSAPWDPLPGPPPVLPHSPHSHL) are disordered. The span at 529 to 539 (DPLPGPPPVLP) shows a compositional bias: pro residues. Serine 541 is subject to Phosphoserine. Positions 544 to 546 (SHL) match the Microbody targeting signal motif.

As to quaternary structure, interacts with NDC1, the interaction is required for nuclear pore localization. Interacts with the inactive form aurora kinase AURKA. Interacts with PGRMC2. As to expression, widely expressed. Particularly abundant in cerebellum, corpus callosum, adrenal gland, pituitary gland, gastrointestinal structures and fetal lung.

The protein localises to the nucleus. It localises to the nuclear pore complex. It is found in the cytoplasm. Its subcellular location is the cytoskeleton. The protein resides in the spindle pole. The protein localises to the nucleus envelope. In terms of biological role, plays a role in the normal development of the peripheral and central nervous system. Required for the correct localization of aurora kinase AURKA and the microtubule minus end-binding protein NUMA1 as well as a subset of AURKA targets which ensures proper spindle formation and timely chromosome alignment. The chain is Aladin (AAAS) from Homo sapiens (Human).